Reading from the N-terminus, the 462-residue chain is Polygalacturonase (462 aa).

The N-terminal stretch at 1 to 22 (MALTRLLLPISILWFCFYSSHT) is a signal peptide. N-linked (GlcNAc...) asparagine glycosylation is present at asparagine 173. Residue aspartate 278 is the Proton donor of the active site. The cysteines at positions 280 and 297 are disulfide-linked. An N-linked (GlcNAc...) asparagine glycan is attached at asparagine 294. The active site involves histidine 301. Asparagine 358 carries an N-linked (GlcNAc...) asparagine glycan. 2 disulfides stabilise this stretch: cysteine 407–cysteine 413 and cysteine 435–cysteine 460.

It belongs to the glycosyl hydrolase 28 family.

It is found in the secreted. It localises to the cell wall. It carries out the reaction (1,4-alpha-D-galacturonosyl)n+m + H2O = (1,4-alpha-D-galacturonosyl)n + (1,4-alpha-D-galacturonosyl)m.. Its function is as follows. Acts in concert with the pectinesterase, in the ripening process. Is involved in cell wall metabolism, specifically in polyuronide degradation. This is Polygalacturonase from Persea americana (Avocado).